The following is a 555-amino-acid chain: HERV-H_2q24.1 provirus ancestral Env polyprotein (555 aa).

An N-terminal signal peptide occupies residues 1–35 (MILAGRAPSNTSTLMKFYSLLLYSLLFSFPFLYHP). Residues 36–515 (LPLPSYLHHT…WALSNWMSWV (480 aa)) are Extracellular-facing. N-linked (GlcNAc...) asparagine glycosylation occurs at Asn47. Positions 64-67 (CWLC) match the CXXC motif. N-linked (GlcNAc...) asparagine glycosylation is found at Asn222, Asn265, Asn283, Asn352, and Asn370. Residues 388–408 (VIPLIPLMVGLGLSASTIALS) form a fusion peptide region. Asn475 carries an N-linked (GlcNAc...) asparagine glycan. The helical transmembrane segment at 516 to 536 (LPILSPLIPIFLLLLFGPCIF) threads the bilayer. Residues 537 to 555 (HLVSQFIQNRIQAITNHSI) are Cytoplasmic-facing.

This sequence belongs to the gamma type-C retroviral envelope protein family. HERV class-I H env subfamily. The surface (SU) and transmembrane (TM) proteins form a heterodimer. SU and TM are attached by noncovalent interactions or by a labile interchain disulfide bond. In terms of processing, specific enzymatic cleavages in vivo yield the mature SU and TM proteins. In terms of tissue distribution, low expression in testis.

The protein localises to the virion. It is found in the cell membrane. Its function is as follows. Retroviral envelope proteins mediate receptor recognition and membrane fusion during early infection. Endogenous envelope proteins may have kept, lost or modified their original function during evolution. This endogenous envelope protein has lost its original fusogenic properties. In terms of biological role, SU mediates receptor recognition. TM anchors the envelope heterodimer to the viral membrane through one transmembrane domain. The other hydrophobic domain, called fusion peptide, mediates fusion of the viral membrane with the target cell membrane. This Homo sapiens (Human) protein is HERV-H_2q24.1 provirus ancestral Env polyprotein.